The sequence spans 252 residues: CD99 antigen-like protein 2 (252 aa).

Residues 1–23 (MEKTLWTWTLLAVFSLLVVKGMS) form the signal peptide. The disordered stretch occupies residues 30–170 (DALGDDDDDE…DLDPADDNNY (141 aa)). Positions 57–68 (AAVKPTLKPVKP) are enriched in low complexity. A compositionally biased stretch (basic and acidic residues) spans 96-120 (NDIKGKGKDSGKGDKEVGGGSRDDG). The chain crosses the membrane as a helical span at residues 178 to 198 (TIAGIVSAVAMALVGAVSSYI).

It belongs to the CD99 family.

Its subcellular location is the cell membrane. The protein localises to the cell junction. Its function is as follows. May function as a homophilic adhesion molecule. The sequence is that of CD99 antigen-like protein 2 (cd99l2) from Danio rerio (Zebrafish).